A 212-amino-acid polypeptide reads, in one-letter code: Ribosomal RNA small subunit methyltransferase G (212 aa).

S-adenosyl-L-methionine contacts are provided by residues Gly76, Met81, 127-128, and Arg145; that span reads VE.

This sequence belongs to the methyltransferase superfamily. RNA methyltransferase RsmG family.

It localises to the cytoplasm. The enzyme catalyses guanosine(527) in 16S rRNA + S-adenosyl-L-methionine = N(7)-methylguanosine(527) in 16S rRNA + S-adenosyl-L-homocysteine. Specifically methylates the N7 position of guanine in position 527 of 16S rRNA. This is Ribosomal RNA small subunit methyltransferase G from Acinetobacter baylyi (strain ATCC 33305 / BD413 / ADP1).